A 334-amino-acid chain; its full sequence is Holliday junction branch migration complex subunit RuvB (334 aa).

A large ATPase domain (RuvB-L) region spans residues 4–184 (ADRLIQPQLQ…FGIPLRLEFY (181 aa)). Residues Arg24, Gly65, Lys68, Thr69, Thr70, 131–133 (EDY), Arg174, Tyr184, and Arg221 contribute to the ATP site. Thr69 contacts Mg(2+). The interval 185–255 (NVKDLSTIVT…VAELALNLLD (71 aa)) is small ATPAse domain (RuvB-S). Residues 258–334 (GEGFDYMDRK…YVHFGMIKPE (77 aa)) are head domain (RuvB-H). Positions 294, 313, and 318 each coordinate DNA.

This sequence belongs to the RuvB family. As to quaternary structure, homohexamer. Forms an RuvA(8)-RuvB(12)-Holliday junction (HJ) complex. HJ DNA is sandwiched between 2 RuvA tetramers; dsDNA enters through RuvA and exits via RuvB. An RuvB hexamer assembles on each DNA strand where it exits the tetramer. Each RuvB hexamer is contacted by two RuvA subunits (via domain III) on 2 adjacent RuvB subunits; this complex drives branch migration. In the full resolvosome a probable DNA-RuvA(4)-RuvB(12)-RuvC(2) complex forms which resolves the HJ.

The protein localises to the cytoplasm. It catalyses the reaction ATP + H2O = ADP + phosphate + H(+). Functionally, the RuvA-RuvB-RuvC complex processes Holliday junction (HJ) DNA during genetic recombination and DNA repair, while the RuvA-RuvB complex plays an important role in the rescue of blocked DNA replication forks via replication fork reversal (RFR). RuvA specifically binds to HJ cruciform DNA, conferring on it an open structure. The RuvB hexamer acts as an ATP-dependent pump, pulling dsDNA into and through the RuvAB complex. RuvB forms 2 homohexamers on either side of HJ DNA bound by 1 or 2 RuvA tetramers; 4 subunits per hexamer contact DNA at a time. Coordinated motions by a converter formed by DNA-disengaged RuvB subunits stimulates ATP hydrolysis and nucleotide exchange. Immobilization of the converter enables RuvB to convert the ATP-contained energy into a lever motion, pulling 2 nucleotides of DNA out of the RuvA tetramer per ATP hydrolyzed, thus driving DNA branch migration. The RuvB motors rotate together with the DNA substrate, which together with the progressing nucleotide cycle form the mechanistic basis for DNA recombination by continuous HJ branch migration. Branch migration allows RuvC to scan DNA until it finds its consensus sequence, where it cleaves and resolves cruciform DNA. The chain is Holliday junction branch migration complex subunit RuvB from Shewanella oneidensis (strain ATCC 700550 / JCM 31522 / CIP 106686 / LMG 19005 / NCIMB 14063 / MR-1).